The sequence spans 299 residues: MSYWINKSICKLNYDSIDNIINTIEPHKPYNNNYCKDNFNIKYLDENNILDYYSFLYKNYNYKFNLDTIKWLLLNPFSKKEYNILLYNEDKIAGTISGIKKTISLHKKIYDCIHVTFLCIDKDYRNKYLHYFLIDEIMKNAKKNDIIIALFNSNIKFNNVKYINEYDTYITYGNKNLIKKSDYFNYELLNKKTQDLFFIYTIEEYNYWFNNNHVVVISYNNNFIALLKTNMLINKNIIQIFIIMEMYIRNNNIHKNYIPNNTIIYENYKCLKTIKLKSKLISYIYNYNFNNLSESIYLF.

The protein belongs to the NMT family.

It catalyses the reaction N-terminal glycyl-[protein] + tetradecanoyl-CoA = N-tetradecanoylglycyl-[protein] + CoA + H(+). Its function is as follows. Adds a myristoyl group to the N-terminal glycine residue of certain proteins. This Amsacta moorei entomopoxvirus (AmEPV) protein is Putative glycylpeptide N-tetradecanoyltransferase.